We begin with the raw amino-acid sequence, 426 residues long: Histidine--tRNA ligase (426 aa).

This sequence belongs to the class-II aminoacyl-tRNA synthetase family. In terms of assembly, homodimer.

The protein resides in the cytoplasm. The enzyme catalyses tRNA(His) + L-histidine + ATP = L-histidyl-tRNA(His) + AMP + diphosphate + H(+). In Shewanella baltica (strain OS195), this protein is Histidine--tRNA ligase.